Reading from the N-terminus, the 194-residue chain is Superoxide dismutase [Cu-Zn] (194 aa).

Positions 1–20 are cleaved as a signal peptide; that stretch reads MTRPLALIIFLVAILTNTDP. 2 residues coordinate Cu cation: H85 and H104. A disulfide bridge connects residues C96 and C188. Residues H104, H112, H121, and D124 each coordinate Zn(2+). Cu cation is bound at residue H162.

This sequence belongs to the Cu-Zn superoxide dismutase family. In terms of assembly, homodimer. Cu cation serves as cofactor. It depends on Zn(2+) as a cofactor.

It catalyses the reaction 2 superoxide + 2 H(+) = H2O2 + O2. Functionally, destroys radicals which are normally produced within the cells and which are toxic to biological systems. In Ramazzottius varieornatus (Water bear), this protein is Superoxide dismutase [Cu-Zn].